Here is a 225-residue protein sequence, read N- to C-terminus: MGYPTPIKLGLSAPINVPLIYKTGEKMRYVAYKIYPEEFLNNEVVDNALIIEGRKVRRVRILGKVENINVGNIISFYVDGVNVRYFEEKPVYIEEGDIVDVIGRPRTYDGEKYIMAEIIRKRDERWIKLRDLEIKKTRKYLLERAELYEEENEEMSLEEEVYTEILNSDVIKDKILAIIENVGEITYEELAEKINIPEEDLEKYLSELKESGDIFEPRPGVYKVL.

The PCI domain maps to 166–214 (LNSDVIKDKILAIIENVGEITYEELAEKINIPEEDLEKYLSELKESGDI).

This is an uncharacterized protein from Methanocaldococcus jannaschii (strain ATCC 43067 / DSM 2661 / JAL-1 / JCM 10045 / NBRC 100440) (Methanococcus jannaschii).